We begin with the raw amino-acid sequence, 257 residues long: uncharacterized protein (257 aa).

6 helical membrane passes run 5–25, 29–49, 53–73, 146–166, 180–200, and 216–236; these read FLYF…IVTF, LALV…GTLI, TLSF…GDWI, LGCI…GIAI, IQFL…WKLW, and VNLC…MIYI.

Belongs to the DedA family.

The protein resides in the cell membrane. This is an uncharacterized protein from Buchnera aphidicola subsp. Baizongia pistaciae (strain Bp).